The chain runs to 165 residues: Endoribonuclease YbeY (165 aa).

The Zn(2+) site is built by His130, His134, and His140.

Belongs to the endoribonuclease YbeY family. It depends on Zn(2+) as a cofactor.

It localises to the cytoplasm. Single strand-specific metallo-endoribonuclease involved in late-stage 70S ribosome quality control and in maturation of the 3' terminus of the 16S rRNA. The polypeptide is Endoribonuclease YbeY (Streptococcus thermophilus (strain CNRZ 1066)).